The following is a 161-amino-acid chain: MPSFDIVSEVDEVELRNAVENSRRELSGRFDFRGKDASIDYKDHVVTLTAEDDFQCKQLVDILRTQLSKRNVEPSTMDVDEKSVHSGKTFSLKVRFKQGIETDIAKKIVKMVKDSKIKVQSQIQGDTVRVTGKARDDLQAVMALVRQADLGQPFQFNNFRD.

This sequence belongs to the YajQ family.

Functionally, nucleotide-binding protein. The sequence is that of Nucleotide-binding protein SO_3815 from Shewanella oneidensis (strain ATCC 700550 / JCM 31522 / CIP 106686 / LMG 19005 / NCIMB 14063 / MR-1).